A 434-amino-acid polypeptide reads, in one-letter code: Iron transporter MagA (434 aa).

Helical transmembrane passes span 6–26 (PELT…GMMT), 31–51 (PAVV…FGLV), 56–76 (AVAT…GMKL), 86–106 (KTAI…ALLL), 113–133 (SLGL…AVVI), 176–196 (LLPA…LLFW), 269–289 (SVLL…KFIW), 294–314 (TVLT…VTAL), 321–341 (WPSA…SFLL), and 357–377 (KLVV…LFTM).

This sequence belongs to the monovalent cation:proton antiporter 2 (CPA2) transporter (TC 2.A.37) family.

The protein localises to the membrane. Its function is as follows. Iron transporter, which is required for the synthesis of bacterial magnetic particles (BMPs). Probably involved in the transport of iron from the environment into the cytoplasm across the cell membrane, and then from the cytoplasm into the BMP lipid vesicle across the BMP membrane. This Paramagnetospirillum magneticum (strain ATCC 700264 / AMB-1) (Magnetospirillum magneticum) protein is Iron transporter MagA (magA).